We begin with the raw amino-acid sequence, 152 residues long: UPF0178 protein CKL_3490 (152 aa).

This sequence belongs to the UPF0178 family.

The chain is UPF0178 protein CKL_3490 from Clostridium kluyveri (strain ATCC 8527 / DSM 555 / NBRC 12016 / NCIMB 10680 / K1).